Consider the following 306-residue polypeptide: Choline-binding protein (306 aa).

An N-terminal signal peptide occupies residues 1–22; that stretch reads MKRKYLKLMIGLALAATLTLSG. The N-palmitoyl cysteine moiety is linked to residue Cys-23. Cys-23 is lipidated: S-diacylglycerol cysteine.

It belongs to the OsmX family.

It is found in the cell membrane. Functionally, member of a high affinity multicomponent binding-protein-dependent transport system for choline. The protein is Choline-binding protein (opuBC) of Bacillus subtilis (strain 168).